The following is a 225-amino-acid chain: Probable polyketide biosynthesis zinc-dependent hydrolase PksB (225 aa).

The Zn(2+) site is built by His-62, His-64, Asp-66, His-67, His-123, Asp-140, and His-181.

This sequence belongs to the metallo-beta-lactamase superfamily. Zn(2+) is required as a cofactor.

The protein resides in the cytoplasm. Its pathway is antibiotic biosynthesis; bacillaene biosynthesis. Its function is as follows. Probably involved in some intermediate steps for the synthesis of the antibiotic polyketide bacillaene which is involved in secondary metabolism. The sequence is that of Probable polyketide biosynthesis zinc-dependent hydrolase PksB (pksB) from Bacillus subtilis (strain 168).